A 371-amino-acid chain; its full sequence is N-acetyldiaminopimelate deacetylase (371 aa).

Asp68 is a catalytic residue. Residue Glu127 is the Proton acceptor of the active site.

It belongs to the peptidase M20A family. N-acetyldiaminopimelate deacetylase subfamily.

It catalyses the reaction N-acetyl-(2S,6S)-2,6-diaminopimelate + H2O = (2S,6S)-2,6-diaminopimelate + acetate. The protein operates within amino-acid biosynthesis; L-lysine biosynthesis via DAP pathway; LL-2,6-diaminopimelate from (S)-tetrahydrodipicolinate (acetylase route): step 3/3. Its function is as follows. Catalyzes the conversion of N-acetyl-diaminopimelate to diaminopimelate and acetate. The sequence is that of N-acetyldiaminopimelate deacetylase from Listeria monocytogenes serotype 4a (strain HCC23).